The chain runs to 230 residues: Probable GTP-binding protein EngB (230 aa).

The region spanning 36 to 224 (ERPKVIVMGR…KHRINKRINI (189 aa)) is the EngB-type G domain. Residues 44–51 (GRSNVGKS), 69–73 (GVTLK), 86–89 (DLPG), 166–169 (NKMD), and 201–203 (VPA) each bind GTP. Mg(2+)-binding residues include S51 and T71.

It belongs to the TRAFAC class TrmE-Era-EngA-EngB-Septin-like GTPase superfamily. EngB GTPase family. Mg(2+) is required as a cofactor.

In terms of biological role, necessary for normal cell division and for the maintenance of normal septation. The protein is Probable GTP-binding protein EngB of Methanococcus maripaludis (strain DSM 14266 / JCM 13030 / NBRC 101832 / S2 / LL).